Here is a 30-residue protein sequence, read N- to C-terminus: Rothein 3.1 (30 aa).

The residue at position 30 (leucine 30) is a Leucine amide.

Expressed by the skin dorsal glands.

The protein resides in the secreted. In terms of biological role, lacks antimicrobial activity. Does not inhibit the formation of NO by neuronal nitric oxide. This Litoria rothii (Roth's tree frog) protein is Rothein 3.1.